A 1226-amino-acid chain; its full sequence is Polyamine-transporting ATPase 13A3 (1226 aa).

Over 1 to 28 (MDKEERKIINQGQEDEMEIYGYNLSRWK) the chain is Cytoplasmic. The stretch at 29–49 (LAIVSLGVICTGGFLLLLLYW) is an intramembrane region. Residues 50 to 205 (MPEWRVKATC…IAVKVPSVFK (156 aa)) are Cytoplasmic-facing. S98 carries the phosphoserine modification. A helical transmembrane segment spans residues 206–226 (LLIKEVLNPFYIFQLFSVILW). The Lumenal portion of the chain corresponds to 227 to 232 (STDEYY). A helical transmembrane segment spans residues 233–253 (YYALAIVVMSIVSIVSSLYSI). Residues 254-409 (RKQYVMLHDM…KPTDFKLYRD (156 aa)) are Cytoplasmic-facing. The chain crosses the membrane as a helical span at residues 410-430 (AYLFLLCLVAVAGIGFIYTII). The Lumenal segment spans residues 431–448 (NSILNEVQVGVIIIESLD). The helical transmembrane segment at 449–469 (IITITVPPALPAAMTAGIVYA) threads the bilayer. Over 470 to 940 (QRRLKKIGIF…ALITSFCVFK (471 aa)) the chain is Cytoplasmic. D498 serves as the catalytic 4-aspartylphosphate intermediate. Mg(2+)-binding residues include D498 and T500. Residues 498-500 (DKT), F628, R684, and D750 each bind ATP. S817 is modified (phosphoserine). D883 contacts Mg(2+). Residue 883–887 (DGAND) coordinates ATP. A helical transmembrane segment spans residues 941–961 (FMALYSIIQYFSVTLLYSILS). Residue N962 is a topological domain, lumenal. The chain crosses the membrane as a helical span at residues 963 to 983 (LGDFQFLFIDLAIILVVVFTM). Residues 984–999 (SLNPAWKELVAQRPPS) are Cytoplasmic-facing. Residues 1000–1020 (GLISGALLFSVLSQIIICIGF) form a helical membrane-spanning segment. Residues 1021 to 1073 (QSLGFFWVKQQPWYEVWHPKSDACNATGSLLWNSSHLDNETELDEHNIQNYEN) lie on the Lumenal side of the membrane. A helical transmembrane segment spans residues 1074–1094 (TTVFFISSFQYLIVAIAFSKG). At 1095–1105 (KPFRQPCYKNY) the chain is on the cytoplasmic side. The helical transmembrane segment at 1106 to 1126 (FFVFSVIFLYVFILFIMLYPV) threads the bilayer. The Lumenal segment spans residues 1127 to 1143 (ASVDQVLQIVCVPYQWR). The chain crosses the membrane as a helical span at residues 1144–1164 (VTMLIIVLVNAFVSITVEESV). The Cytoplasmic segment spans residues 1165–1226 (DRWRKCCLPW…NGSCQIITIT (62 aa)).

It belongs to the cation transport ATPase (P-type) (TC 3.A.3) family. Type V subfamily.

Its subcellular location is the recycling endosome membrane. The protein resides in the early endosome membrane. The protein localises to the late endosome membrane. The enzyme catalyses putrescine(out) + ATP + H2O = putrescine(in) + ADP + phosphate + H(+). Functionally, ATP-driven pump involved in endocytosis-dependent polyamine transport. Uses ATP as an energy source to transfer polyamine precursor putrescine from the endosomal compartment to the cytosol. In Macaca fascicularis (Crab-eating macaque), this protein is Polyamine-transporting ATPase 13A3 (ATP13A3).